The following is a 368-amino-acid chain: 1-deoxy-D-xylulose 5-phosphate reductoisomerase (368 aa).

NADPH is bound by residues Thr7, Gly8, Ser9, Ile10, Gly31, Lys32, Asn33, and Asn113. Residue Lys114 participates in 1-deoxy-D-xylulose 5-phosphate binding. Glu115 is an NADPH binding site. Asp133 contacts Mn(2+). Positions 134, 135, 158, and 181 each coordinate 1-deoxy-D-xylulose 5-phosphate. Glu135 contacts Mn(2+). Residue Gly187 participates in NADPH binding. 4 residues coordinate 1-deoxy-D-xylulose 5-phosphate: Ser194, Asn199, Lys200, and Glu203. Glu203 contacts Mn(2+).

This sequence belongs to the DXR family. Mg(2+) serves as cofactor. Mn(2+) is required as a cofactor.

It carries out the reaction 2-C-methyl-D-erythritol 4-phosphate + NADP(+) = 1-deoxy-D-xylulose 5-phosphate + NADPH + H(+). Its pathway is isoprenoid biosynthesis; isopentenyl diphosphate biosynthesis via DXP pathway; isopentenyl diphosphate from 1-deoxy-D-xylulose 5-phosphate: step 1/6. Catalyzes the NADPH-dependent rearrangement and reduction of 1-deoxy-D-xylulose-5-phosphate (DXP) to 2-C-methyl-D-erythritol 4-phosphate (MEP). The protein is 1-deoxy-D-xylulose 5-phosphate reductoisomerase of Helicobacter pylori (strain HPAG1).